The sequence spans 533 residues: 1-aminocyclopropane-1-carboxylate synthase 5 (533 aa).

At K358 the chain carries N6-(pyridoxal phosphate)lysine.

The protein belongs to the class-I pyridoxal-phosphate-dependent aminotransferase family. Pyridoxal 5'-phosphate is required as a cofactor. In terms of tissue distribution, expressed in shoots and leaf blades. Expressed at low levels in leaf sheaths. Expressed in vasculature of roots and shoots.

The enzyme catalyses S-adenosyl-L-methionine = 1-aminocyclopropane-1-carboxylate + S-methyl-5'-thioadenosine + H(+). It participates in alkene biosynthesis; ethylene biosynthesis via S-adenosyl-L-methionine; ethylene from S-adenosyl-L-methionine: step 1/2. Catalyzes the formation of 1-aminocyclopropane-1-carboxylate, a direct precursor of ethylene in higher plants. The protein is 1-aminocyclopropane-1-carboxylate synthase 5 of Oryza sativa subsp. japonica (Rice).